We begin with the raw amino-acid sequence, 336 residues long: Cytoskeleton protein RodZ (336 aa).

Residues 1-111 are Cytoplasmic-facing; that stretch reads MNTEATHDQN…LGKRRKKRDG (111 aa). The region spanning 19–71 is the HTH cro/C1-type domain; that stretch reads LRNAREQLGLSQQAVAERLCLKVSTVRDIEEDKAPADLASTFLRGYIRSYARL. Residues 30–49 constitute a DNA-binding region (H-T-H motif); the sequence is QQAVAERLCLKVSTVRDIEE. Residues 112-132 traverse the membrane as a helical; Signal-anchor for type II membrane protein segment; sequence WLMTFTWLVLFVVIGLSGAWW. The Periplasmic portion of the chain corresponds to 133 to 336; that stretch reads WQDHKAQQEE…TLNAEQSPAQ (204 aa). Positions 148-164 are enriched in polar residues; that stretch reads DQSSAELNNNQSQSVPL. The segment at 148-248 is disordered; it reads DQSSAELNNN…TDQAGVTTPA (101 aa). Low complexity predominate over residues 165–201; that stretch reads DTSTTTDQAMATTPTSPVDTTATNTQTPAATTAPSPT. Over residues 202–217 the composition is skewed to polar residues; it reads VDSQQNAVVPPSQANV. The segment covering 219–236 has biased composition (low complexity); sequence TAATPAPAATTMPDGAAP.

Belongs to the RodZ family.

Its subcellular location is the cell inner membrane. In terms of biological role, cytoskeletal protein that is involved in cell-shape control through regulation of the length of the long axis. This Escherichia coli (strain SMS-3-5 / SECEC) protein is Cytoskeleton protein RodZ.